Here is a 365-residue protein sequence, read N- to C-terminus: MEVCLPNGHQVVDLINNAFEGRVSIYSAQEGWDKTISAQPDMMVCGGAVVCMHCLGVVGSLQRKLKHLPHHRCNQQIRHQDYVDVQFADRVTAHWKRGMLSFVAQMHEMMNDVSPDDLDRVRTEGGSLVELNWLQVDPNSMFRSIHSSWTDPLQVVDDLDTKLDQYWTALNLMIDSSDLIPNFMMRDPSHAFNGVKLGGDARQTQFSRTFDSRSSLEWGVMVYDYSELEHDPSKGRAYRKELVTPARDFGHFGLSHYSRATTPILGKMPAVFSGMLTGNCKMYPFIKGTAKLKTVRKLVEAVNHAWGVEKIRYALGPGGMTGWYNRTMQQAPIVLTPAALTMFPDTIKFGDLNYPVMIGDPMILG.

The CCHC-type zinc finger occupies 51 to 73; sequence CMHCLGVVGSLQRKLKHLPHHRC.

This sequence belongs to the orthoreovirus sigma-3 protein family. In terms of assembly, heterohexamer of three sigma-3 and three Mu-1 proteins. The RNA-binding form is probably a homodimer. In terms of processing, cleaved during virus the endosomal proteolytic disassembly of the outer capsid.

The protein localises to the virion. The protein resides in the host cytoplasm. It is found in the host nucleus. Its function is as follows. Stimulates translation by blocking the activation of the dsRNA-dependent protein kinase EIF2AK2/PKR, thereby inhibiting the host interferon response. Sigma3 prevents the activation of EIF2AK2 by competing with the kinase for dsRNA-binding. Functionally, the viral outer shell polypeptides, of which sigma-3 is one, impose structural constraints that prevent elongation of nascent transcripts by the RNA-dependent RNA polymerase lambda-3. The chain is Outer capsid protein sigma-3 (S4) from Reovirus type 3 (strain Dearing) (T3D).